Here is a 1400-residue protein sequence, read N- to C-terminus: MKDLLNLLKSQGQVTEFDKIRIALAPPDLIRSWSFGEVKKPETINYRTFKPERDGLFCARIFGPIKDYECLCGKYKRLKHRGVICEKCGVEVTLSKVRRERMGHIELASPTAHIWFLKSLPSRIGLMLDMTLRDIERVLYFESFVVTEPGMTTLERGQLLTDEEYFDAMEEFGDEFEAKMGAEAVQQLLMELDLVEEIKILREEVESTNSDTKLKKLSKRLKLMEAFKDSGNAPEWMVLTVLPVLPPDLRPLVPLDGGRFATSDLNDLYRRVINRNNRLKRLLDLSAPDIIVRNEKRMLQESVDALLDNGRRGRAITGSNKRPLKSLADMIKGKQGRFRQNLLGKRVDYSGRSVIVVGPTLKLHECGLPKKMALELFKPFIFAKLEGRGLATTIKAAKKMVERETAEVWDILAEVIREHPVMLNRAPTLHRLGIQAFEPVLIEGKAIQLHPLVCAAFNADFDGDQMAVHVPLTLEAQLEARALMMSTNNILSPANGEPIIGPTQDVVLGLYYISRDRVNAQGEGHVFADTKEVMRALGNKQVHIHARVKVRVHEVVKDLEGNVEERTFIADTTPGRCKLWDIVPAGLGFDMVNQNMTKKAISKLLNTCYRILGTKETCIFADQLMYLGFREATLSGSSIGVEDMVIPDAKYTMIDAAEEEVREIEEQFASGLVTRGERYNKVVDIWARTNDQIAKAMMENLRVEVVKNRDGKDEEQGSFNSIFMMADSGARGSAAQIRQLAGMRGLMAKPDGSIIETPITSNFREGLNVLQYFISTHGARKGLADTALKTANSGYLTRRLVDVAQDLVVNHIDCGTEEGLLMTPLIEGGDVVEPLRERVLGRVVARDVMNPLNQDEVAVEAGTLLDEVWVAQLETMGVDEVLVRSPITCATRWGVCATCYGRDLARGHQVNVGEAVGVIAAQSIGEPGTQLTMRTFHIGGAASRASAVSSIQIKHGGKVRFHNAKHVQHKDGLVIVSRSADLAVADELGRERERYKLPYGATVTVNEGDEVSGGQVVATWDPHTHPIIAEVEGKVQFGDMEEGITVNHQTDELTGLTNIEMLSSQNRPSAGKDMRPVIRVLDSKGKPIVMPNTDMPAQYFLPGGALCGLKDGANIGVGDVIARIPQESSKTRDITGGLPRVADLFEARNPKEAAILAEKTGTVSFGKETKGKVRLVITPDNSDDNYEELIPKWRQLNVFEGERVEKGEVVSDGPLNPHDILRLKGESELARYIVNEVQEVYRLQGVKINDKHIETIIRQMLRKVEILEVGESHFIKGEQAEYARVMEEIDRLKAEDKMLPQYQRLLLGITKASLATESFISAASFQETTRVLTEAAVTGKEDDLRGLKENVVVGRLIPAGTGYAYHMERRRQRADARGPEAPTMDEVEAALSEALSSSGE.

The Zn(2+) site is built by Cys70, Cys72, Cys85, and Cys88. Positions 460, 462, and 464 each coordinate Mg(2+). Residues Cys814, Cys889, Cys896, and Cys899 each contribute to the Zn(2+) site.

It belongs to the RNA polymerase beta' chain family. The RNAP catalytic core consists of 2 alpha, 1 beta, 1 beta' and 1 omega subunit. When a sigma factor is associated with the core the holoenzyme is formed, which can initiate transcription. Mg(2+) is required as a cofactor. It depends on Zn(2+) as a cofactor.

It carries out the reaction RNA(n) + a ribonucleoside 5'-triphosphate = RNA(n+1) + diphosphate. In terms of biological role, DNA-dependent RNA polymerase catalyzes the transcription of DNA into RNA using the four ribonucleoside triphosphates as substrates. The protein is DNA-directed RNA polymerase subunit beta' of Alcanivorax borkumensis (strain ATCC 700651 / DSM 11573 / NCIMB 13689 / SK2).